Consider the following 129-residue polypeptide: Chorion class A protein L11 (129 aa).

Positions 1 to 21 are cleaved as a signal peptide; sequence MSTFAFLLLCVQACLIQNVYG. A left arm region spans residues 22–64; sequence QCLGRGLGGCGCGGGLGGYGLGYGLGGYGGGYGYGGYGGGYYG. The tract at residues 65–112 is central domain; the sequence is GYGGEGVGNVGVAGVLPVGGVTAVGGRVPIIGGVEFGGPACAGGCVSI. The interval 113–129 is right arm; the sequence is CGHCAPTCGCGYGGLYY.

This sequence belongs to the chorion protein family.

Its function is as follows. This protein is one of many from the eggshell of the silk moth. The polypeptide is Chorion class A protein L11 (Bombyx mori (Silk moth)).